The chain runs to 179 residues: Large ribosomal subunit protein uL6 (179 aa).

This sequence belongs to the universal ribosomal protein uL6 family. Part of the 50S ribosomal subunit.

Its function is as follows. This protein binds to the 23S rRNA, and is important in its secondary structure. It is located near the subunit interface in the base of the L7/L12 stalk, and near the tRNA binding site of the peptidyltransferase center. The polypeptide is Large ribosomal subunit protein uL6 (Bifidobacterium adolescentis (strain ATCC 15703 / DSM 20083 / NCTC 11814 / E194a)).